The following is a 398-amino-acid chain: Phosphoglycerate kinase (398 aa).

Substrate is bound by residues 24-26 (DFN), Arg-40, 63-66 (HMGR), Arg-122, and Arg-155. Residues Lys-206, Gly-294, Glu-325, and 354 to 357 (GGDS) contribute to the ATP site.

This sequence belongs to the phosphoglycerate kinase family. Monomer.

Its subcellular location is the cytoplasm. The catalysed reaction is (2R)-3-phosphoglycerate + ATP = (2R)-3-phospho-glyceroyl phosphate + ADP. It functions in the pathway carbohydrate degradation; glycolysis; pyruvate from D-glyceraldehyde 3-phosphate: step 2/5. The protein is Phosphoglycerate kinase of Picosynechococcus sp. (strain ATCC 27264 / PCC 7002 / PR-6) (Agmenellum quadruplicatum).